The following is a 2560-amino-acid chain: Plipastatin synthase subunit B (2560 aa).

The interval 7-310 is condensation 1; that stretch reads IQDIYPLSHM…NTVPVRIRSA (304 aa). The domain 1 (tyrosine-activating) stretch occupies residues 7–1042; sequence IQDIYPLSHM…AVKLMSLKEH (1036 aa). The segment at 496–889 is adenylation 1; sequence TYRQLQVRAN…QAPGVKEAAV (394 aa). The Carrier 1 domain occupies 965–1040; that stretch reads APRTLIEADL…SMAVKLMSLK (76 aa). S1000 carries the O-(pantetheine 4'-phosphoryl)serine modification. Positions 1052-1342 are condensation 2; sequence QRDVYPLSFS…NTLAMRSKPE (291 aa). Residues 1052 to 2553 are domain 2 (D-allo-threonine-activating); the sequence is QRDVYPLSFS…DLTLDELSEI (1502 aa). The segment at 1527 to 1927 is adenylation 2; it reads TYRDLNEKAE…QYPMIKEAAV (401 aa). Residues 2006-2080 form the Carrier 2 domain; it reads SPRNEIETVM…ELSARVRKDV (75 aa). S2041 is subject to O-(pantetheine 4'-phosphoryl)serine. The segment at 2088–2553 is epimerization; sequence VEGEITWTPI…DLTLDELSEI (466 aa).

This sequence belongs to the ATP-dependent AMP-binding enzyme family. The cofactor is pantetheine 4'-phosphate.

In terms of biological role, this protein is a multifunctional enzyme, able to activate and polymerize the amino acids Tyr and Thr as part of the biosynthesis of the lipopeptide antibiotic plipastatin. The Thr residue is further converted to the D-allo-isomer form. The activation sites for these amino acids consist of individual domains. The sequence is that of Plipastatin synthase subunit B (ppsB) from Bacillus subtilis (strain 168).